The chain runs to 453 residues: Homogentisate 1,2-dioxygenase (453 aa).

A compositionally biased stretch (basic and acidic residues) spans 1–12; sequence MLEKAERQRKAA. Residues 1 to 43 are disordered; the sequence is MLEKAERQRKAAPDQQRSAGYMPGFGNDFETESLPGSLPQGQN. Histidine 306 (proton acceptor) is an active-site residue. The Fe cation site is built by histidine 349 and glutamate 355. The homogentisate site is built by tyrosine 364 and histidine 385. Histidine 385 contributes to the Fe cation binding site.

The protein belongs to the homogentisate dioxygenase family. As to quaternary structure, hexamer; dimer of trimers. Fe cation is required as a cofactor.

It catalyses the reaction homogentisate + O2 = 4-maleylacetoacetate + H(+). It functions in the pathway amino-acid degradation; L-phenylalanine degradation; acetoacetate and fumarate from L-phenylalanine: step 4/6. Involved in the catabolism of homogentisate (2,5-dihydroxyphenylacetate or 2,5-OH-PhAc), a central intermediate in the degradation of phenylalanine and tyrosine. Catalyzes the oxidative ring cleavage of the aromatic ring of homogentisate to yield maleylacetoacetate. The polypeptide is Homogentisate 1,2-dioxygenase (Sinorhizobium medicae (strain WSM419) (Ensifer medicae)).